The sequence spans 1238 residues: Lysine-specific demethylase JMJ703 (1238 aa).

A disordered region spans residues 56 to 79 (EECQPSAAVSRSDTPCSTSGTQTC). Polar residues predominate over residues 62-79 (AAVSRSDTPCSTSGTQTC). Positions 154 to 195 (APVFYPTEEEFEDTLKYIESIRPMAEPYGICRIVPPSSWKPP) constitute a JmjN domain. The tract at residues 215–266 (KVDKLQNRKSSKKGRRGGMMKRRKLAESEENSATAHTQTGMQQSPERFGFEP) is disordered. Over residues 221–238 (NRKSSKKGRRGGMMKRRK) the composition is skewed to basic residues. Residues 245–259 (NSATAHTQTGMQQSP) show a composition bias toward polar residues. The JmjC domain occupies 348–514 (KYAQSGWNLN…IGHNAVELYR (167 aa)). The Fe cation site is built by His394, Glu396, and His482. Disordered stretches follow at residues 699-725 (GPRR…QKDE), 777-798 (YNGG…SSPS), 834-863 (TGDS…SSLE), and 910-978 (ASSQ…LQRT). Low complexity predominate over residues 706–719 (SQASAVSLVSSSTS). Over residues 910–923 (ASSQQFVRTGPWTQ) the composition is skewed to polar residues. A compositionally biased stretch (low complexity) spans 924-936 (SASHEASSPSTSA). The span at 964–978 (SFSNQQPNDGRLQRT) shows a compositional bias: polar residues. Positions 1019–1077 (VVHRFKCSVEPLEIGVVLSGRLWSSSQAIFPKGFRSRVKYFSIVDPIQMAYYISEILDA) constitute an FYR N-terminal domain. Residues 1079–1169 (MQGPLFMVKL…HICTEYWRSR (91 aa)) form the FYR C-terminal domain.

Requires Fe(2+) as cofactor. Expressed in roots, leaf sheaths, stems and panicles.

Its subcellular location is the nucleus. The catalysed reaction is N(6),N(6),N(6)-trimethyl-L-lysyl(4)-[histone H3] + 3 2-oxoglutarate + 3 O2 = L-lysyl(4)-[histone H3] + 3 formaldehyde + 3 succinate + 3 CO2. In terms of biological role, histone demethylase that demethylates 'Lys-4' (H3K4me) of histone H3 with a specific activity for H3K4me3, H3K4me2 and H3K4me1. No activity on H3K9me3/2/1, H3K27me3/2/1 and H3K36me3/2/1. Involved in the control of stem elongation by regulating methylation states of H3K4me3 on cytokinin oxidase (CKX) gene family, which may cause increased expression of CKX genes and reduced cytokinin levels. Prevents ectopic retrotransposition by regulating the levels of H3K4me3 in two non-LTR retrotransposons KARMA and LINE-1 (L1) and reinforcing their repressed states. The chain is Lysine-specific demethylase JMJ703 (JMJ703) from Oryza sativa subsp. japonica (Rice).